Consider the following 257-residue polypeptide: Snake venom serine protease KN1 (257 aa).

Residues 1 to 18 (MVLIRVLANLLILQLSYA) form the signal peptide. A propeptide spanning residues 19 to 24 (QKSSEL) is cleaved from the precursor. The 224-residue stretch at 25–248 (VVGGHPCNIN…HLDWIKSIIA (224 aa)) folds into the Peptidase S1 domain. 5 disulfide bridges follow: Cys-31–Cys-162, Cys-49–Cys-65, Cys-141–Cys-209, Cys-173–Cys-188, and Cys-199–Cys-224. The active-site Charge relay system is His-64. Asn-102 is a glycosylation site (N-linked (GlcNAc...) asparagine). Residue Asp-109 is the Charge relay system of the active site. Residues Asn-120 and Asn-121 are each glycosylated (N-linked (GlcNAc...) asparagine). Ser-203 acts as the Charge relay system in catalysis.

This sequence belongs to the peptidase S1 family. Snake venom subfamily. Monomer. In terms of tissue distribution, expressed by the venom gland.

The protein localises to the secreted. In terms of biological role, snake venom serine protease that may act in the hemostasis system of the prey. The sequence is that of Snake venom serine protease KN1 from Trimeresurus stejnegeri (Chinese green tree viper).